Reading from the N-terminus, the 62-residue chain is Fungus-induced protein 1 (62 aa).

Positions 1-22 are cleaved as a signal peptide; sequence MSQNLFQILLIFAILAALQVQG.

This chain is Fungus-induced protein 1, found in Caenorhabditis briggsae.